Consider the following 811-residue polypeptide: Ribonucleoside-diphosphate reductase large subunit (811 aa).

Substrate-binding positions include Thr231, Ser246–Cys247, Gly277, Asn450–Glu454, and Pro636–Ser640. Cys247 and Cys467 form a disulfide bridge. Asn450 acts as the Proton acceptor in catalysis. The active-site Cysteine radical intermediate is the Cys452. Catalysis depends on Glu454, which acts as the Proton acceptor.

Belongs to the ribonucleoside diphosphate reductase large chain family. As to quaternary structure, heterotetramer composed of a homodimer of the large subunit (R1) and a homodimer of the small subunit (R2). Larger multisubunit protein complex are also active, composed of (R1)n(R2)n.

The enzyme catalyses a 2'-deoxyribonucleoside 5'-diphosphate + [thioredoxin]-disulfide + H2O = a ribonucleoside 5'-diphosphate + [thioredoxin]-dithiol. Functionally, ribonucleoside-diphosphate reductase holoenzyme provides the precursors necessary for viral DNA synthesis. Allows virus growth in non-dividing cells, as well as reactivation from latency in infected hosts. Catalyzes the biosynthesis of deoxyribonucleotides from the corresponding ribonucleotides. This chain is Ribonucleoside-diphosphate reductase large subunit, found in Amazona oratrix (yellow-headed parrot).